The following is a 257-amino-acid chain: Small ribosomal subunit protein uS2 (257 aa).

It belongs to the universal ribosomal protein uS2 family.

The protein is Small ribosomal subunit protein uS2 of Bartonella henselae (strain ATCC 49882 / DSM 28221 / CCUG 30454 / Houston 1) (Rochalimaea henselae).